The sequence spans 189 residues: Glucose-6-phosphate isomerase (189 aa).

H88, H90, E97, and H136 together coordinate Fe cation.

The protein belongs to the archaeal-type GPI family. Homodimer.

The protein localises to the cytoplasm. The catalysed reaction is alpha-D-glucose 6-phosphate = beta-D-fructose 6-phosphate. Its pathway is carbohydrate degradation; glycolysis; D-glyceraldehyde 3-phosphate and glycerone phosphate from D-glucose: step 2/4. The chain is Glucose-6-phosphate isomerase from Thermococcus gammatolerans (strain DSM 15229 / JCM 11827 / EJ3).